A 277-amino-acid chain; its full sequence is Phosphatidylglycerol--prolipoprotein diacylglyceryl transferase (277 aa).

4 helical membrane passes run 22–42, 59–79, 107–127, and 133–153; these read ISIR…YIVV, LFFY…CLFY, GYEG…LWLY, and MNYM…ACFI. Position 154 (Arg154) interacts with a 1,2-diacyl-sn-glycero-3-phospho-(1'-sn-glycerol). 3 consecutive transmembrane segments (helical) span residues 186–206, 216–236, and 251–271; these read PAQL…MFLY, GFFF…VEFL, and MGQW…FFYG.

The protein belongs to the Lgt family.

It localises to the cell inner membrane. The catalysed reaction is L-cysteinyl-[prolipoprotein] + a 1,2-diacyl-sn-glycero-3-phospho-(1'-sn-glycerol) = an S-1,2-diacyl-sn-glyceryl-L-cysteinyl-[prolipoprotein] + sn-glycerol 1-phosphate + H(+). The protein operates within protein modification; lipoprotein biosynthesis (diacylglyceryl transfer). Functionally, catalyzes the transfer of the diacylglyceryl group from phosphatidylglycerol to the sulfhydryl group of the N-terminal cysteine of a prolipoprotein, the first step in the formation of mature lipoproteins. The sequence is that of Phosphatidylglycerol--prolipoprotein diacylglyceryl transferase from Bacteroides fragilis (strain ATCC 25285 / DSM 2151 / CCUG 4856 / JCM 11019 / LMG 10263 / NCTC 9343 / Onslow / VPI 2553 / EN-2).